Here is a 370-residue protein sequence, read N- to C-terminus: Glutamate 5-kinase (370 aa).

ATP is bound at residue Lys12. Positions 52, 139, and 151 each coordinate substrate. ATP-binding positions include 171–172 and 213–219; these read SD and TGGMFTK. The PUA domain maps to 278-356; that stretch reads QAHIAVDAGA…SDIESILGYS (79 aa).

Belongs to the glutamate 5-kinase family.

Its subcellular location is the cytoplasm. It catalyses the reaction L-glutamate + ATP = L-glutamyl 5-phosphate + ADP. Its pathway is amino-acid biosynthesis; L-proline biosynthesis; L-glutamate 5-semialdehyde from L-glutamate: step 1/2. In terms of biological role, catalyzes the transfer of a phosphate group to glutamate to form L-glutamate 5-phosphate. This Herpetosiphon aurantiacus (strain ATCC 23779 / DSM 785 / 114-95) protein is Glutamate 5-kinase.